A 72-amino-acid chain; its full sequence is High-potential iron-sulfur protein isozyme 1 (72 aa).

Ala-1 is modified (N-carbamoylalanine; partial). [4Fe-4S] cluster contacts are provided by Cys-34, Cys-37, Cys-51, and Cys-65.

It belongs to the high-potential iron-sulfur protein (HiPIP) family. Homodimer.

Its function is as follows. Specific class of high-redox-potential 4Fe-4S ferredoxins. Functions in anaerobic electron transport in most purple and in some other photosynthetic bacteria and in at least one genus (Paracoccus) of halophilic, denitrifying bacteria. In Ectothiorhodospira mobilis, this protein is High-potential iron-sulfur protein isozyme 1.